Reading from the N-terminus, the 473-residue chain is H(+)/Cl(-) exchange transporter ClcA (473 aa).

The Cytoplasmic portion of the chain corresponds to 1-32 (MKTDTPSLETPQAARLRRRQLIRQLLERDKTP). Residues 33–69 (LAILFMAAVVGTLVGLAAVAFDKGVAWLQNQRMGALV) form a helical membrane-spanning segment. Residues 70–76 (HTADNYP) lie on the Periplasmic side of the membrane. A helical transmembrane segment spans residues 77-100 (LLLTVAFLCSAVLAMFGYFLVRKY). Residues 106–110 (GSGIP) carry the Selectivity filter part_1 motif. Ser-107 is a binding site for chloride. The helical intramembrane region spans 109-116 (IPEIEGAL). Over 117–123 (EDQRPVR) the chain is Cytoplasmic. A run of 2 helical transmembrane segments spans residues 124-141 (WWRV…TLGG) and 148-166 (EGPT…LDIF). The Selectivity filter part_2 signature appears at 146–150 (GREGP). Over 167-176 (RLKGDEARHT) the chain is Cytoplasmic. Intramembrane regions (helical) lie at residues 177-189 (LLAT…LAAA) and 193-201 (PLAGILFII). At 202–214 (EEMRPQFRYTLIS) the chain is on the cytoplasmic side. A helical transmembrane segment spans residues 215-232 (IKAVFIGVIMSTIMYRIF). The Periplasmic portion of the chain corresponds to 233–252 (NHEVALIDVGKLSDAPLNTL). A helical transmembrane segment spans residues 253-281 (WLYLILGIIFGIFGPIFNKWVLGMQDLLH). The Cytoplasmic segment spans residues 282-287 (RVHGGN). Residues 288 to 309 (ITKWILMGGAIGGLCGLLGFVA) traverse the membrane as a helical segment. Residues 310-329 (PATSGGGFNLIPIATAGNFS) are Periplasmic-facing. Helical transmembrane passes span 330 to 349 (MGML…LCFS) and 355 to 376 (GIFA…MVAV). The short motif at 355–359 (GIFAP) is the Selectivity filter part_3 element. Chloride contacts are provided by Ile-356 and Phe-357. At 377–386 (ELFPQYHLEA) the chain is on the periplasmic side. Residues 387–401 (GTFAIAGMGALLAAS) constitute an intramembrane region (helical). Positions 402–404 (IRA) form an intramembrane region, note=Loop between two helices. Positions 405–416 (PLTGIILVLEMT) form an intramembrane region, helical. An intramembrane region (note=Loop between two helices) is located at residues 417–421 (DNYQL). Residues 422-438 (ILPMIITGLGATLLAQF) traverse the membrane as a helical segment. Residues 439 to 473 (TGGKPLYSAILARTLAKQEAEQLARSKAASASENT) are Cytoplasmic-facing. Residue Tyr-445 coordinates chloride.

This sequence belongs to the chloride channel (TC 2.A.49) family. ClcA subfamily. In terms of assembly, homodimer.

The protein localises to the cell inner membrane. It catalyses the reaction 2 chloride(in) + H(+)(out) = 2 chloride(out) + H(+)(in). Its function is as follows. Proton-coupled chloride transporter. Functions as antiport system and exchanges two chloride ions for 1 proton. Probably acts as an electrical shunt for an outwardly-directed proton pump that is linked to amino acid decarboxylation, as part of the extreme acid resistance (XAR) response. The polypeptide is H(+)/Cl(-) exchange transporter ClcA (Escherichia coli O9:H4 (strain HS)).